We begin with the raw amino-acid sequence, 89 residues long: Small ribosomal subunit protein uS17 (89 aa).

This sequence belongs to the universal ribosomal protein uS17 family. Part of the 30S ribosomal subunit.

Functionally, one of the primary rRNA binding proteins, it binds specifically to the 5'-end of 16S ribosomal RNA. In Variovorax paradoxus (strain S110), this protein is Small ribosomal subunit protein uS17.